A 497-amino-acid polypeptide reads, in one-letter code: Solute carrier family 2, facilitated glucose transporter member 6 (497 aa).

Residues 1–36 (MQEPLLRTEGLDYDTFPEVPATPGERERAGALKNRR) lie on the Cytoplasmic side of the membrane. The short motif at 5 to 6 (LL) is the Dileucine internalization motif element. Residues 37–57 (VFLATFAAVLGNFSFGYALVY) traverse the membrane as a helical segment. Residues 58–80 (TSPVIPELKLSSDPALHLDKIQA) are Extracellular-facing. Residues 81–101 (SWFGSVFTLGAAAGGLSAMLL) traverse the membrane as a helical segment. Residues 102–115 (NDLLGRKLSIMFSA) lie on the Cytoplasmic side of the membrane. Residues 116–136 (VPSAIGYAIMAGARGLWMLLL) traverse the membrane as a helical segment. Residues 137–138 (GR) are Extracellular-facing. Residues 139–159 (MLTGFAGGLTAACIPVYVSEI) form a helical membrane-spanning segment. The Cytoplasmic segment spans residues 160–171 (APPDVRGALGAT). The chain crosses the membrane as a helical span at residues 172–192 (PQLMAVFGSLSLYALGLLLPW). Residue Q173 participates in a D-hexose binding. A topological domain (extracellular) is located at residue R193. A helical transmembrane segment spans residues 194–214 (WLAVAGEGPVLIMILLLSFMP). The Cytoplasmic portion of the chain corresponds to 215–273 (NSPRFLLSKSRDEEALQALTWLRADSEVHWEFEQIQDNVRRQSSRVSWAEAREPRVYRP). The chain crosses the membrane as a helical span at residues 274–294 (VLIAVLMRFLQQLTGITPILV). 284–285 (QQ) contacts a D-hexose. Topologically, residues 295-312 (YLQTIFDNTSVVLPSQQD) are extracellular. N302 carries N-linked (GlcNAc...) asparagine glycosylation. The helical transmembrane segment at 313–333 (AAIVGAVRLLSVLIAAVTMDL) threads the bilayer. Over 334–337 (AGRK) the chain is Cytoplasmic. Residues 338 to 358 (VLLYVSASVMFAANLTLGLYV) form a helical membrane-spanning segment. The Extracellular segment spans residues 359–385 (QFVPRPLTPNSTVEIVTLGDTAFNYLT). The N-linked (GlcNAc...) asparagine glycan is linked to N368. The chain crosses the membrane as a helical span at residues 386-406 (LIPLLATMLFIMGYAMGWGPI). At 407-425 (TWLLMSEVLPLRARGVASG) the chain is on the cytoplasmic side. W408 contributes to the a D-hexose binding site. The helical transmembrane segment at 426-446 (LCVLVSWLTAFVLTNYFLLAV) threads the bilayer. Residue N447 is a topological domain, extracellular. Residues 448–468 (AFGLQVPFFFFSAICLLSLLF) traverse the membrane as a helical segment. The Cytoplasmic portion of the chain corresponds to 469–497 (TGCCVPETRGRSLEQIEAFFHTRRMSFRP).

The protein belongs to the major facilitator superfamily. Sugar transporter (TC 2.A.1.1) family. As to expression, mainly expressed in brain and spleen. Also expressed in lung, heart, muscle, liver, kidney, fat, whole blood, testes, ovaries and uterus.

The protein localises to the lysosome membrane. Probable sugar transporter that acts as a regulator of glycolysis in macrophages. Does not transport glucose. The sequence is that of Solute carrier family 2, facilitated glucose transporter member 6 from Mus musculus (Mouse).